The primary structure comprises 137 residues: Putative pre-16S rRNA nuclease (137 aa).

It belongs to the YqgF nuclease family.

It localises to the cytoplasm. Could be a nuclease involved in processing of the 5'-end of pre-16S rRNA. This is Putative pre-16S rRNA nuclease from Bacillus cereus (strain G9842).